The sequence spans 99 residues: Cysteine-rich C-terminal protein 1 (99 aa).

Disordered stretches follow at residues 1–42 (MSSQ…CCGS) and 65–99 (RRRR…CSGC). The segment covering 22-32 (APCPAPAPTPA) has biased composition (pro residues). Positions 83-99 (QRSQRSNNRSSGCCSGC) are enriched in low complexity.

The sequence is that of Cysteine-rich C-terminal protein 1 (CRCT1) from Homo sapiens (Human).